We begin with the raw amino-acid sequence, 387 residues long: Probable peptidoglycan glycosyltransferase FtsW (387 aa).

Helical transmembrane passes span 20-40 (LYLL…VGSA), 61-81 (LFLL…LAFW), 86-106 (PVML…GIGV), 149-169 (TIRG…LLLL), 172-192 (DFGA…LGGA), 194-214 (LWHF…LAWY), 284-304 (LMGS…VLLI), 322-342 (GLGI…MGVL), and 349-369 (LPLM…VALI).

Belongs to the SEDS family. FtsW subfamily.

The protein localises to the cell inner membrane. The catalysed reaction is [GlcNAc-(1-&gt;4)-Mur2Ac(oyl-L-Ala-gamma-D-Glu-L-Lys-D-Ala-D-Ala)](n)-di-trans,octa-cis-undecaprenyl diphosphate + beta-D-GlcNAc-(1-&gt;4)-Mur2Ac(oyl-L-Ala-gamma-D-Glu-L-Lys-D-Ala-D-Ala)-di-trans,octa-cis-undecaprenyl diphosphate = [GlcNAc-(1-&gt;4)-Mur2Ac(oyl-L-Ala-gamma-D-Glu-L-Lys-D-Ala-D-Ala)](n+1)-di-trans,octa-cis-undecaprenyl diphosphate + di-trans,octa-cis-undecaprenyl diphosphate + H(+). The protein operates within cell wall biogenesis; peptidoglycan biosynthesis. In terms of biological role, peptidoglycan polymerase that is essential for cell division. This Nitrosococcus halophilus (strain Nc4) protein is Probable peptidoglycan glycosyltransferase FtsW.